The sequence spans 303 residues: NmrA-like family domain-containing oxidoreductase FVEG_08287 (303 aa).

Residues 8 to 13, 8 to 14, 36 to 39, R37, 56 to 57, 77 to 79, and 159 to 162 each bind NADP(+); these read LGAGEL, LGAGELG, LRPS, QG, IFR, and FMSF.

Belongs to the NmrA-type oxidoreductase family.

In terms of biological role, nmrA-like family domain-containing oxidoreductase; part of the Fusarium detoxification of benzoxazolinone cluster 1 (FDB1) involved in the degradation of benzoxazolinones produced by the host plant. Maize, wheat, and rye produce the 2 benzoxazinone phytoanticipins 2,4-dihy-droxy-7-methoxy-1,4-benzoxazin-3-one (DIMBOA) and 2,4-dihydroxy-1,4-benzoxazin-3-one (DIBOA) that, due to their inherent instability once released, spontaneously degrade to the more stable corresponding benzoxazolinones, 6-methoxy-2-benzoxazolinone (MBOA) and 2-benzoxazolinone (BOA), respectively. The first step in the detoxification of benzoxazolinones involves the hydrolysis of the cyclic ester bond of benzoxazolinones by the FDB1 cluster gamma-lactamase MBL1 to aminophenols. MBL1 is able to convert BOA into 2-aminophenol (2-AP), as well as MBOA into 5-methoxy-2-aminophenol (2-AMP). The FDB2 cluster N-malonyltransferase FDB2/NAT1 then metabolizes aminophenols via N-malonylation to non-toxic malonamic acids. FDB2/NAT1 converts 2-AP into N-(2-hydroxyphenyl) malonamic acid (HPMA) and 2-AMP into N-(2-hydroxy-4-methoxyphenyl) malonamic acid (HMPMA). The duplicated dienlactone hydrolases DLH1 and DLH2 may provide redundant function for hydrolyzing the lactone moiety in the BOA molecule. The roles of the amidases an other enzymes encoded by the 2 FDB clusters have not been identified so far. The chain is NmrA-like family domain-containing oxidoreductase FVEG_08287 from Gibberella moniliformis (strain M3125 / FGSC 7600) (Maize ear and stalk rot fungus).